We begin with the raw amino-acid sequence, 230 residues long: Phosphoribosylformylglycinamidine synthase subunit PurQ (230 aa).

The Glutamine amidotransferase type-1 domain maps to 3 to 230 (SAIIVFPGTN…LFQSIVESLS (228 aa)). Cys87 functions as the Nucleophile in the catalytic mechanism. Active-site residues include His204 and Glu206.

Part of the FGAM synthase complex composed of 1 PurL, 1 PurQ and 2 PurS subunits.

Its subcellular location is the cytoplasm. The enzyme catalyses N(2)-formyl-N(1)-(5-phospho-beta-D-ribosyl)glycinamide + L-glutamine + ATP + H2O = 2-formamido-N(1)-(5-O-phospho-beta-D-ribosyl)acetamidine + L-glutamate + ADP + phosphate + H(+). It carries out the reaction L-glutamine + H2O = L-glutamate + NH4(+). It participates in purine metabolism; IMP biosynthesis via de novo pathway; 5-amino-1-(5-phospho-D-ribosyl)imidazole from N(2)-formyl-N(1)-(5-phospho-D-ribosyl)glycinamide: step 1/2. Part of the phosphoribosylformylglycinamidine synthase complex involved in the purines biosynthetic pathway. Catalyzes the ATP-dependent conversion of formylglycinamide ribonucleotide (FGAR) and glutamine to yield formylglycinamidine ribonucleotide (FGAM) and glutamate. The FGAM synthase complex is composed of three subunits. PurQ produces an ammonia molecule by converting glutamine to glutamate. PurL transfers the ammonia molecule to FGAR to form FGAM in an ATP-dependent manner. PurS interacts with PurQ and PurL and is thought to assist in the transfer of the ammonia molecule from PurQ to PurL. The chain is Phosphoribosylformylglycinamidine synthase subunit PurQ from Rhodospirillum rubrum (strain ATCC 11170 / ATH 1.1.1 / DSM 467 / LMG 4362 / NCIMB 8255 / S1).